A 368-amino-acid polypeptide reads, in one-letter code: Putative flavoprotein monooxygenase (368 aa).

FAD-binding positions include A14, E34, S41, 52-53, V110, A307, and I319; that span reads IT.

FAD serves as cofactor.

Its function is as follows. FAD-binding protein that may have monooxygenase activity using NADPH and/or NADH as an electron donor. In Staphylococcus aureus (strain Mu50 / ATCC 700699), this protein is Putative flavoprotein monooxygenase.